A 151-amino-acid polypeptide reads, in one-letter code: Globin CTT-IIIA (151 aa).

The Globin domain occupies 8–147 (SMTDAQVAAV…MFHVIFNALD (140 aa)). Position 98 (H98) interacts with heme b.

Belongs to the globin family. In terms of assembly, monomer.

The sequence is that of Globin CTT-IIIA from Chironomus thummi thummi (Midge).